Reading from the N-terminus, the 871-residue chain is Pre-mRNA-processing factor 40 homolog B (871 aa).

WW domains lie at 92-125 and 133-166; these read GPPR…KPSV and LLSQ…RPKD. At lysine 148 the chain carries N6-acetyllysine. The tract at residues 171–277 is disordered; sequence EVLVKQEAAG…RSGLSWSNRE (107 aa). A Glycyl lysine isopeptide (Lys-Gly) (interchain with G-Cter in SUMO2) cross-link involves residue lysine 175. Low complexity predominate over residues 182-191; sequence QQQQLPQTLQ. Positions 192–211 are enriched in pro residues; the sequence is PQPPQPQPDPPPVPPGPTPV. Low complexity-rich tracts occupy residues 212–221 and 245–255; these read PTGLLEPEPG and EGPSSSGQHQP. FF domains are found at residues 276 to 330, 340 to 397, 410 to 470, 490 to 550, 554 to 610, and 625 to 682; these read REKA…YKAQ, RLRA…VLFF, RRRN…HIRA, QRKN…YVEE, RFHD…LLEK, and RMRR…FLQV. The disordered stretch occupies residues 690–871; it reads HLHTKGRKHG…TLLQQLDDHQ (182 aa). The segment covering 691–711 has biased composition (basic residues); that stretch reads LHTKGRKHGRKGKKHHHKRSH. A compositionally biased stretch (low complexity) spans 739 to 756; sequence SESGSEPSSSLDSVESGG. Serine 764 carries the post-translational modification Phosphoserine. Positions 777 to 793 are enriched in basic residues; sequence RKAKKPKKKTKKRRHKS. Basic and acidic residues predominate over residues 803 to 824; it reads EEKAGKESDEKEQEQDKDRELQ. At serine 832 the chain carries Phosphoserine. Residue lysine 838 forms a Glycyl lysine isopeptide (Lys-Gly) (interchain with G-Cter in SUMO2) linkage. Residue serine 852 is modified to Phosphoserine.

It belongs to the PRPF40 family. In terms of assembly, interacts with the N-terminus of HD. As to expression, expressed in the striatum and cortex of the brain (at protein level). Highly expressed in testis, fetal kidney and fetal brain. Moderately expressed in pancreas, skeletal muscle, placenta, brain and heart. Weakly expressed in colon, ileum, ovary, prostate, spleen, kidney and fetal lung.

The protein resides in the nucleus speckle. Its function is as follows. May be involved in pre-mRNA splicing. The polypeptide is Pre-mRNA-processing factor 40 homolog B (PRPF40B) (Homo sapiens (Human)).